The primary structure comprises 417 residues: MLRKLLIGTALATSFAFSAHAADVKEVQMLHWWTSGGEAAALNVLKGDLAKEGFAWKDVPVAGGGGDAAMTALKAMVAAGNYPTASQMLGYTVLDYAAAGVMGDLTETAKKEGWDKSVPAALQKFSVYEGKWVAAPVNVHSVNWLWINKAVMDKIGGTEPKTFDDFVALLDKAKAAGVIPLALGGQNWQEATMFDSVVLSTGGPEFYKKAFNDLDDASLKSDTMKKSFDNLAKLVTYVDPNFSGRDWNLATAMVIKGDALVQVMGDWAKGEFHAAKKTPGTDFLCYRFPGTDGSVIYNSDMFGMFNVPDDRKAAQVALATATLSKSFQSAFNVVKGSVPARTDVPDTDFDACGKKGIADLKKANEGGTLFGSLAQGYGAPPAVANAYKDVVSKFVHGQIKTSDEAVTELVKAIDDAK.

Positions 1 to 21 (MLRKLLIGTALATSFAFSAHA) are cleaved as a signal peptide.

This sequence belongs to the bacterial solute-binding protein 1 family.

The protein localises to the periplasm. In terms of biological role, part of a binding-protein-dependent transport system for a sugar. The chain is Probable sugar-binding periplasmic protein from Mesorhizobium japonicum (strain LMG 29417 / CECT 9101 / MAFF 303099) (Mesorhizobium loti (strain MAFF 303099)).